The chain runs to 279 residues: Ribosomal RNA small subunit methyltransferase A (279 aa).

S-adenosyl-L-methionine is bound by residues His-11, Leu-13, Gly-42, Glu-63, Asp-88, and Asn-104.

This sequence belongs to the class I-like SAM-binding methyltransferase superfamily. rRNA adenine N(6)-methyltransferase family. RsmA subfamily.

The protein localises to the cytoplasm. The enzyme catalyses adenosine(1518)/adenosine(1519) in 16S rRNA + 4 S-adenosyl-L-methionine = N(6)-dimethyladenosine(1518)/N(6)-dimethyladenosine(1519) in 16S rRNA + 4 S-adenosyl-L-homocysteine + 4 H(+). Functionally, specifically dimethylates two adjacent adenosines (A1518 and A1519) in the loop of a conserved hairpin near the 3'-end of 16S rRNA in the 30S particle. May play a critical role in biogenesis of 30S subunits. This is Ribosomal RNA small subunit methyltransferase A from Synechococcus sp. (strain JA-3-3Ab) (Cyanobacteria bacterium Yellowstone A-Prime).